Reading from the N-terminus, the 144-residue chain is Large ribosomal subunit protein uL15 (144 aa).

Residues 1 to 56 (MELNNLKPAEGAKHAKRRVGRGIGSGLGKTAGRGHKGQKSRSGGFHKVGFEGGQMP) form a disordered region. Over residues 21-31 (RGIGSGLGKTA) the composition is skewed to gly residues.

The protein belongs to the universal ribosomal protein uL15 family. In terms of assembly, part of the 50S ribosomal subunit.

Its function is as follows. Binds to the 23S rRNA. This Burkholderia mallei (strain NCTC 10247) protein is Large ribosomal subunit protein uL15.